Here is an 82-residue protein sequence, read N- to C-terminus: Large ribosomal subunit protein uL23 (82 aa).

It belongs to the universal ribosomal protein uL23 family. As to quaternary structure, part of the 50S ribosomal subunit. Contacts protein L29.

Functionally, binds to 23S rRNA. One of the proteins that surrounds the polypeptide exit tunnel on the outside of the ribosome. In Sulfolobus acidocaldarius (strain ATCC 33909 / DSM 639 / JCM 8929 / NBRC 15157 / NCIMB 11770), this protein is Large ribosomal subunit protein uL23.